A 209-amino-acid polypeptide reads, in one-letter code: Ribosomal RNA large subunit methyltransferase E (209 aa).

S-adenosyl-L-methionine contacts are provided by Gly63, Trp65, Asp83, Asp99, and Asp124. Lys164 acts as the Proton acceptor in catalysis.

It belongs to the class I-like SAM-binding methyltransferase superfamily. RNA methyltransferase RlmE family.

It localises to the cytoplasm. It catalyses the reaction uridine(2552) in 23S rRNA + S-adenosyl-L-methionine = 2'-O-methyluridine(2552) in 23S rRNA + S-adenosyl-L-homocysteine + H(+). In terms of biological role, specifically methylates the uridine in position 2552 of 23S rRNA at the 2'-O position of the ribose in the fully assembled 50S ribosomal subunit. The protein is Ribosomal RNA large subunit methyltransferase E of Photobacterium profundum (strain SS9).